We begin with the raw amino-acid sequence, 277 residues long: Putative acetylornithine deacetylase (277 aa).

It carries out the reaction N(2)-acetyl-L-ornithine + H2O = L-ornithine + acetate. Its pathway is amino-acid biosynthesis; L-arginine biosynthesis; L-ornithine from N(2)-acetyl-L-ornithine (linear): step 1/1. The sequence is that of Putative acetylornithine deacetylase (argE) from Leptospira biflexa.